Here is a 313-residue protein sequence, read N- to C-terminus: Dimethyladenosine transferase (313 aa).

Positions 1–21 (MPKVKSGAIGRRRGRQEQRRE) are disordered. Residues His37, Leu39, Gly64, Glu85, Asp113, and Asn128 each contribute to the S-adenosyl-L-methionine site.

The protein belongs to the class I-like SAM-binding methyltransferase superfamily. rRNA adenine N(6)-methyltransferase family. As to quaternary structure, part of the small subunit (SSU) processome, composed of more than 70 proteins and the RNA chaperone small nucleolar RNA (snoRNA) U3.

It is found in the nucleus. The protein resides in the nucleoplasm. The protein localises to the nucleolus. It carries out the reaction adenosine(1779)/adenosine(1780) in 18S rRNA + 4 S-adenosyl-L-methionine = N(6)-dimethyladenosine(1779)/N(6)-dimethyladenosine(1780) in 18S rRNA + 4 S-adenosyl-L-homocysteine + 4 H(+). Specifically dimethylates two adjacent adenosines in the loop of a conserved hairpin near the 3'-end of 18S rRNA in the 40S particle. Involved in the pre-rRNA processing steps leading to small-subunit rRNA production independently of its RNA-modifying catalytic activity. Part of the small subunit (SSU) processome, first precursor of the small eukaryotic ribosomal subunit. During the assembly of the SSU processome in the nucleolus, many ribosome biogenesis factors, an RNA chaperone and ribosomal proteins associate with the nascent pre-rRNA and work in concert to generate RNA folding, modifications, rearrangements and cleavage as well as targeted degradation of pre-ribosomal RNA by the RNA exosome. The sequence is that of Dimethyladenosine transferase from Homo sapiens (Human).